Consider the following 512-residue polypeptide: Alanine--glyoxylate aminotransferase 2, mitochondrial (512 aa).

The transit peptide at 1–39 (MSLAWRTLQKAFYLETSLRILQMRPSLSCASRIYVPKLT) directs the protein to the mitochondrion. Lysine 55 carries the N6-acetyllysine modification. Lysine 69 is modified (N6-acetyllysine; alternate). At lysine 69 the chain carries N6-succinyllysine; alternate. N6-acetyllysine is present on lysine 82. Lysine 260 carries the N6-acetyllysine; alternate modification. N6-succinyllysine; alternate is present on lysine 260. Lysine 302 carries the post-translational modification N6-succinyllysine. An N6-(pyridoxal phosphate)lysine modification is found at lysine 348. N6-acetyllysine; alternate is present on residues lysine 415 and lysine 418. N6-succinyllysine; alternate is present on residues lysine 415 and lysine 418. An N6-acetyllysine modification is found at lysine 452.

It belongs to the class-III pyridoxal-phosphate-dependent aminotransferase family. Homotetramer. Pyridoxal 5'-phosphate serves as cofactor. As to expression, expressed in the liver, lung and kidney.

It is found in the mitochondrion. The catalysed reaction is glyoxylate + L-alanine = glycine + pyruvate. It carries out the reaction (R)-3-amino-2-methylpropanoate + pyruvate = 2-methyl-3-oxopropanoate + L-alanine. The enzyme catalyses 3-oxopropanoate + L-alanine = beta-alanine + pyruvate. It catalyses the reaction 2-oxobutanoate + L-alanine = (2S)-2-aminobutanoate + pyruvate. The catalysed reaction is N(omega),N(omega)-dimethyl-L-arginine + pyruvate = 5-(3,3-dimethylguanidino)-2-oxopentanoate + L-alanine. It carries out the reaction N(omega),N('omega)-dimethyl-L-arginine + pyruvate = 5-(3,3'-dimethylguanidino)-2-oxopentanoate + L-alanine. The enzyme catalyses N(omega),N(omega)-dimethyl-L-arginine + glyoxylate = 5-(3,3-dimethylguanidino)-2-oxopentanoate + glycine. It catalyses the reaction N(omega),N('omega)-dimethyl-L-arginine + glyoxylate = 5-(3,3'-dimethylguanidino)-2-oxopentanoate + glycine. The catalysed reaction is N(omega)-methyl-L-arginine + pyruvate = 5-(3-methylguanidino)-2-oxopentanoate + L-alanine. It carries out the reaction N(omega)-methyl-L-arginine + glyoxylate = 5-(3-methylguanidino)-2-oxopentanoate + glycine. The enzyme catalyses L-ornithine + pyruvate = 5-amino-2-oxopentanoate + L-alanine. It catalyses the reaction L-ornithine + glyoxylate = 5-amino-2-oxopentanoate + glycine. The catalysed reaction is (2S)-2-aminobutanoate + glyoxylate = 2-oxobutanoate + glycine. It carries out the reaction N(omega),N(omega)-dimethyl-L-arginine + oxaloacetate = 5-(3,3-dimethylguanidino)-2-oxopentanoate + L-aspartate. The enzyme catalyses oxaloacetate + L-alanine = L-aspartate + pyruvate. It catalyses the reaction N(omega),N(omega)-dimethyl-L-arginine + 2-oxobutanoate = 5-(3,3-dimethylguanidino)-2-oxopentanoate + (2S)-2-aminobutanoate. The catalysed reaction is 2-oxopentanoate + N(omega),N(omega)-dimethyl-L-arginine = 5-(3,3-dimethylguanidino)-2-oxopentanoate + L-2-aminopentanoate. It carries out the reaction 2-oxohexanoate + N(omega),N(omega)-dimethyl-L-arginine = L-2-aminohexanoate + 5-(3,3-dimethylguanidino)-2-oxopentanoate. Inhibited by 5-fluorouracil and 6-fluorouracil. Inhibited by phenylhydrazine, hydroxylamine, l-amino-L-proline, para-chloromercuribenzoate and HgCl2. Functionally, multifunctional aminotransferase with a broad substrate specificity. Catalyzes the conversion of glyoxylate to glycine using alanine as the amino donor. Catalyzes metabolism of not L- but the D-isomer of D-beta-aminoisobutyric acid to generate 2-methyl-3-oxopropanoate and alanine. Catalyzes the transfer of the amino group from beta-alanine to pyruvate to yield L-alanine and 3-oxopropanoate. Can metabolize NG-monomethyl-L-arginine (NMMA), asymmetric NG,NG-dimethyl-L-arginine (ADMA) and symmetric NG,N'G-dimethyl-L-arginine (SDMA). ADMA is a potent inhibitor of nitric-oxide (NO) synthase, and this activity provides mechanism through which the kidney regulates blood pressure. This Rattus norvegicus (Rat) protein is Alanine--glyoxylate aminotransferase 2, mitochondrial (Agxt2).